Consider the following 183-residue polypeptide: Large ribosomal subunit protein uL6 (183 aa).

Belongs to the universal ribosomal protein uL6 family. In terms of assembly, part of the 50S ribosomal subunit.

Its function is as follows. This protein binds to the 23S rRNA, and is important in its secondary structure. It is located near the subunit interface in the base of the L7/L12 stalk, and near the tRNA binding site of the peptidyltransferase center. The chain is Large ribosomal subunit protein uL6 from Porphyromonas gingivalis (strain ATCC 33277 / DSM 20709 / CIP 103683 / JCM 12257 / NCTC 11834 / 2561).